A 398-amino-acid polypeptide reads, in one-letter code: Large ribosomal subunit protein uL3 (398 aa).

A compositionally biased stretch (basic and acidic residues) spans 1 to 10; that stretch reads MSHRKFEAPR. A disordered region spans residues 1–34; sequence MSHRKFEAPRHGNLGFRPRKRAARHQGKVKSFPK. The span at 17–28 shows a compositional bias: basic residues; that stretch reads RPRKRAARHQGK.

It belongs to the universal ribosomal protein uL3 family.

The protein resides in the cytoplasm. Functionally, the L3 protein is a component of the large subunit of cytoplasmic ribosomes. In Dictyostelium discoideum (Social amoeba), this protein is Large ribosomal subunit protein uL3 (rpl3).